The chain runs to 240 residues: Ribonuclease 3 (240 aa).

The RNase III domain maps to 9 to 141; it reads VEEFQKKTGI…LLAAIYLDQG (133 aa). A Mg(2+)-binding site is contributed by Glu54. Residue Asp58 is part of the active site. The Mg(2+) site is built by Asp127 and Glu130. The active site involves Glu130. The 70-residue stretch at 168–237 folds into the DRBM domain; that stretch reads DYKTALQEIV…ARIAYEKLLK (70 aa).

The protein belongs to the ribonuclease III family. In terms of assembly, homodimer. Requires Mg(2+) as cofactor.

The protein localises to the cytoplasm. The enzyme catalyses Endonucleolytic cleavage to 5'-phosphomonoester.. Digests double-stranded RNA. Involved in the processing of primary rRNA transcript to yield the immediate precursors to the large and small rRNAs (23S and 16S). Processes some mRNAs, and tRNAs when they are encoded in the rRNA operon. Processes pre-crRNA and tracrRNA of type II CRISPR loci if present in the organism. This Thermotoga sp. (strain RQ2) protein is Ribonuclease 3.